Reading from the N-terminus, the 339-residue chain is Glycerol-3-phosphate dehydrogenase [NAD(P)+] (339 aa).

S15, Y16, H36, and K110 together coordinate NADPH. Sn-glycerol 3-phosphate is bound by residues K110, G139, and T141. Residue A143 coordinates NADPH. Residues K195, D248, S258, R259, and N260 each coordinate sn-glycerol 3-phosphate. The active-site Proton acceptor is the K195. R259 provides a ligand contact to NADPH. Positions 283 and 285 each coordinate NADPH.

The protein belongs to the NAD-dependent glycerol-3-phosphate dehydrogenase family.

The protein localises to the cytoplasm. The catalysed reaction is sn-glycerol 3-phosphate + NAD(+) = dihydroxyacetone phosphate + NADH + H(+). The enzyme catalyses sn-glycerol 3-phosphate + NADP(+) = dihydroxyacetone phosphate + NADPH + H(+). It participates in membrane lipid metabolism; glycerophospholipid metabolism. Catalyzes the reduction of the glycolytic intermediate dihydroxyacetone phosphate (DHAP) to sn-glycerol 3-phosphate (G3P), the key precursor for phospholipid synthesis. The protein is Glycerol-3-phosphate dehydrogenase [NAD(P)+] of Erwinia tasmaniensis (strain DSM 17950 / CFBP 7177 / CIP 109463 / NCPPB 4357 / Et1/99).